Consider the following 92-residue polypeptide: Large ribosomal subunit protein bL25 (92 aa).

This sequence belongs to the bacterial ribosomal protein bL25 family. Part of the 50S ribosomal subunit; part of the 5S rRNA/L5/L18/L25 subcomplex. Contacts the 5S rRNA. Binds to the 5S rRNA independently of L5 and L18.

Its function is as follows. This is one of the proteins that binds to the 5S RNA in the ribosome where it forms part of the central protuberance. The sequence is that of Large ribosomal subunit protein bL25 from Aliivibrio salmonicida (strain LFI1238) (Vibrio salmonicida (strain LFI1238)).